The primary structure comprises 273 residues: Large ribosomal subunit protein uL2cz/uL2cy (273 aa).

Disordered stretches follow at residues 1 to 20 (MAIH…AVDS) and 224 to 254 (NPVD…PALG).

This sequence belongs to the universal ribosomal protein uL2 family. Part of the 50S ribosomal subunit.

The protein localises to the plastid. Its subcellular location is the chloroplast. This is Large ribosomal subunit protein uL2cz/uL2cy (rpl2-A) from Nuphar advena (Common spatterdock).